Reading from the N-terminus, the 467-residue chain is Glutamate--tRNA ligase (467 aa).

The short motif at 13–23 is the 'HIGH' region element; the sequence is PSPTGFLHLGG. Positions 118–133 are enriched in basic and acidic residues; it reads ARGDKPRYDGTWRPEP. Residues 118–141 form a disordered region; that stretch reads ARGDKPRYDGTWRPEPGKTLPAIP. A 'KMSKS' region motif is present at residues 245–249; it reads KLSKR. K248 contributes to the ATP binding site.

Belongs to the class-I aminoacyl-tRNA synthetase family. Glutamate--tRNA ligase type 1 subfamily. As to quaternary structure, monomer.

The protein localises to the cytoplasm. The enzyme catalyses tRNA(Glu) + L-glutamate + ATP = L-glutamyl-tRNA(Glu) + AMP + diphosphate. Its function is as follows. Catalyzes the attachment of glutamate to tRNA(Glu) in a two-step reaction: glutamate is first activated by ATP to form Glu-AMP and then transferred to the acceptor end of tRNA(Glu). This Bordetella avium (strain 197N) protein is Glutamate--tRNA ligase.